Here is a 116-residue protein sequence, read N- to C-terminus: Aspartate 1-decarboxylase (116 aa).

Ser-25 (schiff-base intermediate with substrate; via pyruvic acid) is an active-site residue. Pyruvic acid (Ser) is present on Ser-25. Thr-57 is a substrate binding site. Tyr-58 functions as the Proton donor in the catalytic mechanism. Position 73–75 (73–75) interacts with substrate; the sequence is GPA.

It belongs to the PanD family. As to quaternary structure, heterooctamer of four alpha and four beta subunits. Pyruvate serves as cofactor. Is synthesized initially as an inactive proenzyme, which is activated by self-cleavage at a specific serine bond to produce a beta-subunit with a hydroxyl group at its C-terminus and an alpha-subunit with a pyruvoyl group at its N-terminus.

It is found in the cytoplasm. The catalysed reaction is L-aspartate + H(+) = beta-alanine + CO2. The protein operates within cofactor biosynthesis; (R)-pantothenate biosynthesis; beta-alanine from L-aspartate: step 1/1. Functionally, catalyzes the pyruvoyl-dependent decarboxylation of aspartate to produce beta-alanine. The polypeptide is Aspartate 1-decarboxylase (Flavobacterium psychrophilum (strain ATCC 49511 / DSM 21280 / CIP 103535 / JIP02/86)).